A 340-amino-acid polypeptide reads, in one-letter code: Heat-inducible transcription repressor HrcA (340 aa).

The protein belongs to the HrcA family.

Negative regulator of class I heat shock genes (grpE-dnaK-dnaJ and groELS operons). Prevents heat-shock induction of these operons. The protein is Heat-inducible transcription repressor HrcA of Mycoplasma capricolum subsp. capricolum (strain California kid / ATCC 27343 / NCTC 10154).